Here is a 265-residue protein sequence, read N- to C-terminus: Cell division protein DivIB (265 aa).

The Cytoplasmic portion of the chain corresponds to 1 to 33 (MRMELKMMGNVNKSNKTNEYILRRHKKKRKKKL). The helical transmembrane segment at 34–54 (IIFSILLISILVTLCFKHPFF) threads the bilayer. The 69-residue stretch at 54-122 (FNVKIVEVKD…NKIVIHIKER (69 aa)) folds into the POTRA domain. The Extracellular portion of the chain corresponds to 55 to 265 (NVKIVEVKDN…FKGNPVVFIK (211 aa)).

The protein belongs to the FtsQ/DivIB family. DivIB subfamily.

The protein localises to the cell membrane. Functionally, cell division protein that may be involved in stabilizing or promoting the assembly of the division complex. The polypeptide is Cell division protein DivIB (Clostridium tetani (strain Massachusetts / E88)).